We begin with the raw amino-acid sequence, 120 residues long: NAD(P)H-quinone oxidoreductase subunit 3 (120 aa).

The next 3 helical transmembrane spans lie at 2–22 (FVLT…LVPV), 64–84 (MFAL…PWAV), and 89–109 (LGLL…VALV).

Belongs to the complex I subunit 3 family. NDH-1 can be composed of about 15 different subunits; different subcomplexes with different compositions have been identified which probably have different functions.

The protein resides in the cellular thylakoid membrane. The catalysed reaction is a plastoquinone + NADH + (n+1) H(+)(in) = a plastoquinol + NAD(+) + n H(+)(out). The enzyme catalyses a plastoquinone + NADPH + (n+1) H(+)(in) = a plastoquinol + NADP(+) + n H(+)(out). Its function is as follows. NDH-1 shuttles electrons from an unknown electron donor, via FMN and iron-sulfur (Fe-S) centers, to quinones in the respiratory and/or the photosynthetic chain. The immediate electron acceptor for the enzyme in this species is believed to be plastoquinone. Couples the redox reaction to proton translocation, and thus conserves the redox energy in a proton gradient. Cyanobacterial NDH-1 also plays a role in inorganic carbon-concentration. The sequence is that of NAD(P)H-quinone oxidoreductase subunit 3 (ndhC) from Synechocystis sp. (strain ATCC 27184 / PCC 6803 / Kazusa).